The chain runs to 326 residues: tRNA-modifying protein YgfZ (326 aa).

Folate-binding residues include W27 and W189.

Belongs to the tRNA-modifying YgfZ family.

The protein localises to the cytoplasm. In terms of biological role, folate-binding protein involved in regulating the level of ATP-DnaA and in the modification of some tRNAs. It is probably a key factor in regulatory networks that act via tRNA modification, such as initiation of chromosomal replication. This Escherichia coli O157:H7 (strain EC4115 / EHEC) protein is tRNA-modifying protein YgfZ.